The following is a 334-amino-acid chain: Holliday junction branch migration complex subunit RuvB (334 aa).

The large ATPase domain (RuvB-L) stretch occupies residues A4–Y184. Residues R24, G65, K68, T69, T70, E131–Y133, R174, Y184, and R221 contribute to the ATP site. T69 contributes to the Mg(2+) binding site. The tract at residues N185 to D255 is small ATPAse domain (RuvB-S). The interval S258–E334 is head domain (RuvB-H). DNA is bound by residues R294, R313, and R318.

The protein belongs to the RuvB family. Homohexamer. Forms an RuvA(8)-RuvB(12)-Holliday junction (HJ) complex. HJ DNA is sandwiched between 2 RuvA tetramers; dsDNA enters through RuvA and exits via RuvB. An RuvB hexamer assembles on each DNA strand where it exits the tetramer. Each RuvB hexamer is contacted by two RuvA subunits (via domain III) on 2 adjacent RuvB subunits; this complex drives branch migration. In the full resolvosome a probable DNA-RuvA(4)-RuvB(12)-RuvC(2) complex forms which resolves the HJ.

Its subcellular location is the cytoplasm. The catalysed reaction is ATP + H2O = ADP + phosphate + H(+). Functionally, the RuvA-RuvB-RuvC complex processes Holliday junction (HJ) DNA during genetic recombination and DNA repair, while the RuvA-RuvB complex plays an important role in the rescue of blocked DNA replication forks via replication fork reversal (RFR). RuvA specifically binds to HJ cruciform DNA, conferring on it an open structure. The RuvB hexamer acts as an ATP-dependent pump, pulling dsDNA into and through the RuvAB complex. RuvB forms 2 homohexamers on either side of HJ DNA bound by 1 or 2 RuvA tetramers; 4 subunits per hexamer contact DNA at a time. Coordinated motions by a converter formed by DNA-disengaged RuvB subunits stimulates ATP hydrolysis and nucleotide exchange. Immobilization of the converter enables RuvB to convert the ATP-contained energy into a lever motion, pulling 2 nucleotides of DNA out of the RuvA tetramer per ATP hydrolyzed, thus driving DNA branch migration. The RuvB motors rotate together with the DNA substrate, which together with the progressing nucleotide cycle form the mechanistic basis for DNA recombination by continuous HJ branch migration. Branch migration allows RuvC to scan DNA until it finds its consensus sequence, where it cleaves and resolves cruciform DNA. This is Holliday junction branch migration complex subunit RuvB from Shewanella baltica (strain OS223).